The following is a 214-amino-acid chain: Dephospho-CoA kinase (214 aa).

In terms of domain architecture, DPCK spans 20–214; that stretch reads RIGITGGIAS…KLQLKKLYKF (195 aa). 28 to 33 is a binding site for ATP; the sequence is ASGKTI.

Belongs to the CoaE family.

It is found in the cytoplasm. It catalyses the reaction 3'-dephospho-CoA + ATP = ADP + CoA + H(+). It participates in cofactor biosynthesis; coenzyme A biosynthesis; CoA from (R)-pantothenate: step 5/5. Catalyzes the phosphorylation of the 3'-hydroxyl group of dephosphocoenzyme A to form coenzyme A. The chain is Dephospho-CoA kinase from Prochlorococcus marinus (strain NATL2A).